We begin with the raw amino-acid sequence, 70 residues long: Cytochrome c oxidase subunit 8B, mitochondrial (70 aa).

A mitochondrion-targeting transit peptide spans 1-24 (MPRLPPILRLLQAPAKFTVVPKAH). Over 25-38 (VSAKPAKTPTSAVE) the chain is Mitochondrial matrix. The chain crosses the membrane as a helical span at residues 39 to 60 (QAVGISAIVVGFMVPAGWVLAH). Topologically, residues 61–70 (LESYKKSSAA) are mitochondrial intermembrane.

This sequence belongs to the cytochrome c oxidase VIII family. In terms of assembly, component of the cytochrome c oxidase (complex IV, CIV), a multisubunit enzyme composed of 14 subunits. The complex is composed of a catalytic core of 3 subunits MT-CO1, MT-CO2 and MT-CO3, encoded in the mitochondrial DNA, and 11 supernumerary subunits COX4I, COX5A, COX5B, COX6A, COX6B, COX6C, COX7A, COX7B, COX7C, COX8 and NDUFA4, which are encoded in the nuclear genome. The complex exists as a monomer or a dimer and forms supercomplexes (SCs) in the inner mitochondrial membrane with NADH-ubiquinone oxidoreductase (complex I, CI) and ubiquinol-cytochrome c oxidoreductase (cytochrome b-c1 complex, complex III, CIII), resulting in different assemblies (supercomplex SCI(1)III(2)IV(1) and megacomplex MCI(2)III(2)IV(2)).

It localises to the mitochondrion inner membrane. It participates in energy metabolism; oxidative phosphorylation. Functionally, component of the cytochrome c oxidase, the last enzyme in the mitochondrial electron transport chain which drives oxidative phosphorylation. The respiratory chain contains 3 multisubunit complexes succinate dehydrogenase (complex II, CII), ubiquinol-cytochrome c oxidoreductase (cytochrome b-c1 complex, complex III, CIII) and cytochrome c oxidase (complex IV, CIV), that cooperate to transfer electrons derived from NADH and succinate to molecular oxygen, creating an electrochemical gradient over the inner membrane that drives transmembrane transport and the ATP synthase. Cytochrome c oxidase is the component of the respiratory chain that catalyzes the reduction of oxygen to water. Electrons originating from reduced cytochrome c in the intermembrane space (IMS) are transferred via the dinuclear copper A center (CU(A)) of subunit 2 and heme A of subunit 1 to the active site in subunit 1, a binuclear center (BNC) formed by heme A3 and copper B (CU(B)). The BNC reduces molecular oxygen to 2 water molecules using 4 electrons from cytochrome c in the IMS and 4 protons from the mitochondrial matrix. In Mus musculus (Mouse), this protein is Cytochrome c oxidase subunit 8B, mitochondrial (Cox8b).